We begin with the raw amino-acid sequence, 190 residues long: Cell division protein SepF (190 aa).

Belongs to the SepF family. In terms of assembly, homodimer. Interacts with FtsZ.

The protein localises to the cytoplasm. Its function is as follows. Cell division protein that is part of the divisome complex and is recruited early to the Z-ring. Probably stimulates Z-ring formation, perhaps through the cross-linking of FtsZ protofilaments. Its function overlaps with FtsA. This chain is Cell division protein SepF, found in Synechococcus sp. (strain WH7803).